The primary structure comprises 290 residues: Nucleotide-binding protein Sde_3181 (290 aa).

ATP is bound at residue G8 to T15. D60–N63 is a binding site for GTP.

It belongs to the RapZ-like family.

Its function is as follows. Displays ATPase and GTPase activities. The protein is Nucleotide-binding protein Sde_3181 of Saccharophagus degradans (strain 2-40 / ATCC 43961 / DSM 17024).